The chain runs to 287 residues: Toxin zeta (287 aa).

40–47 (GQPGSGKT) contributes to the ATP binding site. Asparagine 66 contacts substrate. Residue aspartate 67 is the Proton acceptor of the active site. Substrate contacts are provided by glutamate 100, threonine 118, arginine 120, and threonine 128. The segment at 267–287 (KLESLQPPTPPIPKTPKLPGI) is disordered. The span at 273 to 287 (PPTPPIPKTPKLPGI) shows a compositional bias: pro residues.

Belongs to the zeta toxin family. As to quaternary structure, in the presence of the epsilon antitoxin forms an inactive PezA(2)PezT(2) heterotetramer. The heterotetramer is still able to bind the UNAG substrate.

The enzyme catalyses UDP-N-acetyl-alpha-D-glucosamine + ATP = UDP-N-acetyl-alpha-D-glucosamine 3'-phosphate + ADP + H(+). In terms of biological role, toxic component of a type II toxin-antitoxin (TA) system. Phosphorylates UDP-N-acetyl-D-glucosamine (UNAG) on the 3'-hydroxyl group of the N-acetyl-D-glucosamine moiety, yielding UNAG-3P. UNAG-3P inhibits MurA, the first committed step in cell wall synthesis, which is then blocked. Phosphorylation is inhibited by cognate epsilon antitoxin. Part of a postsegregational killing (PSK) system involved in the killing of plasmid-free cells. The zeta toxin induces programmed cell death. The polypeptide is Toxin zeta (Streptococcus pyogenes).